The sequence spans 449 residues: NADP-specific glutamate dehydrogenase (449 aa).

The active site involves Lys125.

It belongs to the Glu/Leu/Phe/Val dehydrogenases family. As to quaternary structure, homohexamer.

It carries out the reaction L-glutamate + NADP(+) + H2O = 2-oxoglutarate + NH4(+) + NADPH + H(+). The sequence is that of NADP-specific glutamate dehydrogenase from Giardia intestinalis (Giardia lamblia).